The primary structure comprises 371 residues: N-acetyllactosaminide alpha-2,3-sialyltransferase (371 aa).

A CMP-N-acetyl-beta-neuraminate-binding site is contributed by G255. Catalysis depends on D258, which acts as the Proton acceptor. Residues 278-282 (APHPR), 299-300 (IE), and 322-323 (SG) contribute to the CMP-N-acetyl-beta-neuraminate site. H280 functions as the Proton donor in the catalytic mechanism.

This sequence belongs to the glycosyltransferase 52 family. In terms of assembly, homodimer.

It is found in the cell outer membrane. It carries out the reaction a beta-D-galactosyl-(1-&gt;4)-N-acetyl-beta-D-glucosaminyl derivative + CMP-N-acetyl-beta-neuraminate = an N-acetyl-alpha-neuraminyl-(2-&gt;3)-beta-D-galactosyl-(1-&gt;4)-N-acetyl-beta-D-glucosaminyl derivative + CMP + H(+). The protein operates within bacterial outer membrane biogenesis; lipooligosaccharide biosynthesis. In terms of biological role, catalyzes the transfer of sialic acid from the substrate CMP-N-acetylneuraminate to the terminal galactose residue of the lacto-N-neotetraose branch of surface lipooligosaccharide (LOS), forming an alpha-2,3-sialyl linkage. Thus, functions in the sialylation of LOS, which plays a role in the evasion of the host immune response by protecting N.meningitidis from complement-mediated serum killing and from phagocytic killing by neutrophils. The chain is N-acetyllactosaminide alpha-2,3-sialyltransferase from Neisseria meningitidis serogroup A / serotype 4A (strain DSM 15465 / Z2491).